Here is a 270-residue protein sequence, read N- to C-terminus: Acyl-[acyl-carrier-protein]--UDP-N-acetylglucosamine O-acyltransferase (270 aa).

Belongs to the transferase hexapeptide repeat family. LpxA subfamily. Homotrimer.

The protein localises to the cytoplasm. It catalyses the reaction a (3R)-hydroxyacyl-[ACP] + UDP-N-acetyl-alpha-D-glucosamine = a UDP-3-O-[(3R)-3-hydroxyacyl]-N-acetyl-alpha-D-glucosamine + holo-[ACP]. Its pathway is glycolipid biosynthesis; lipid IV(A) biosynthesis; lipid IV(A) from (3R)-3-hydroxytetradecanoyl-[acyl-carrier-protein] and UDP-N-acetyl-alpha-D-glucosamine: step 1/6. Functionally, involved in the biosynthesis of lipid A, a phosphorylated glycolipid that anchors the lipopolysaccharide to the outer membrane of the cell. This is Acyl-[acyl-carrier-protein]--UDP-N-acetylglucosamine O-acyltransferase from Helicobacter acinonychis (strain Sheeba).